The primary structure comprises 41 residues: U-theraphotoxin-Lk1a (41 aa).

3 cysteine pairs are disulfide-bonded: C1-C16, C8-C21, and C15-C36.

It belongs to the neurotoxin 14 (magi-1) family. 08 (Ltx-4) subfamily. Expressed by the venom gland.

The protein localises to the secreted. Its function is as follows. Toxin that causes irreversible contractile paralysis in adult Aedes aegypti resulting in 100% mortality after 24 hours. The polypeptide is U-theraphotoxin-Lk1a (Lasiodora klugi (Bahia scarlet tarantula)).